A 149-amino-acid chain; its full sequence is Nucleoside diphosphate kinase (149 aa).

ATP-binding residues include Lys-9, Phe-57, Arg-85, Thr-91, Arg-102, and Asn-112. Residue His-115 is the Pros-phosphohistidine intermediate of the active site.

It belongs to the NDK family. In terms of assembly, homotetramer. Requires Mg(2+) as cofactor.

The protein resides in the cytoplasm. The enzyme catalyses a 2'-deoxyribonucleoside 5'-diphosphate + ATP = a 2'-deoxyribonucleoside 5'-triphosphate + ADP. The catalysed reaction is a ribonucleoside 5'-diphosphate + ATP = a ribonucleoside 5'-triphosphate + ADP. Major role in the synthesis of nucleoside triphosphates other than ATP. The ATP gamma phosphate is transferred to the NDP beta phosphate via a ping-pong mechanism, using a phosphorylated active-site intermediate. This Cyanothece sp. (strain PCC 7425 / ATCC 29141) protein is Nucleoside diphosphate kinase.